The chain runs to 354 residues: UPF0597 protein PPA0217 (354 aa).

The protein belongs to the UPF0597 family.

The polypeptide is UPF0597 protein PPA0217 (Cutibacterium acnes (strain DSM 16379 / KPA171202) (Propionibacterium acnes)).